Here is a 545-residue protein sequence, read N- to C-terminus: Ribosomal protein uS12 methylthiotransferase RimO (545 aa).

An MTTase N-terminal domain is found at 7–129 (RRVALVTLGC…IGEHLDAVLG (123 aa)). [4Fe-4S] cluster is bound by residues C16, C52, C92, C197, C201, and C204. One can recognise a Radical SAM core domain in the interval 183–414 (LTAGPVAALK…DLVEQLTATR (232 aa)). Residues 416–510 (QERIGSRVQV…GVDLVAEFTA (95 aa)) form the TRAM domain. 2 disordered regions span residues 454-486 (LPGP…QPGV) and 516-545 (RPSA…ADGT). Low complexity predominate over residues 455–464 (PGPAGAAAGP).

The protein belongs to the methylthiotransferase family. RimO subfamily. [4Fe-4S] cluster serves as cofactor.

It localises to the cytoplasm. The catalysed reaction is L-aspartate(89)-[ribosomal protein uS12]-hydrogen + (sulfur carrier)-SH + AH2 + 2 S-adenosyl-L-methionine = 3-methylsulfanyl-L-aspartate(89)-[ribosomal protein uS12]-hydrogen + (sulfur carrier)-H + 5'-deoxyadenosine + L-methionine + A + S-adenosyl-L-homocysteine + 2 H(+). Catalyzes the methylthiolation of an aspartic acid residue of ribosomal protein uS12. The polypeptide is Ribosomal protein uS12 methylthiotransferase RimO (Frankia alni (strain DSM 45986 / CECT 9034 / ACN14a)).